The primary structure comprises 28 residues: leu operon leader peptide (28 aa).

Its function is as follows. Involved in control of the biosynthesis of leucine. This Salmonella typhi protein is leu operon leader peptide (leuL).